The chain runs to 594 residues: Neuronal PAS domain-containing protein 1 (594 aa).

Residues Q45–R98 enclose the bHLH domain. The region spanning E135–I205 is the PAS 1 domain. The disordered stretch occupies residues G206–A237. Positions S212 to S223 are enriched in low complexity. Residues A294–D360 enclose the PAS 2 domain. In terms of domain architecture, PAC spans T366–A409. The segment at Q427 to F498 is disordered. The span at D453–E480 shows a compositional bias: basic and acidic residues.

Efficient DNA binding requires dimerization with another bHLH protein. Interacts with ARNT; forms a heterodimer that binds core DNA sequence 5'-[AG]CGTG-3' within the hypoxia response element (HRE) leading to a transcriptional repressor on its target gene TH. As to expression, expressed in brain in inhibitory interneurons. Also found in spinal cord.

Its subcellular location is the nucleus. In terms of biological role, may control regulatory pathways relevant to schizophrenia and to psychotic illness. May play a role in late central nervous system development by modulating EPO expression in response to cellular oxygen level. Forms a heterodimer that binds core DNA sequence 5'-TACGTG-3' within the hypoxia response element (HRE) leading to transcriptional repression on its target gene TH. In Mus musculus (Mouse), this protein is Neuronal PAS domain-containing protein 1 (Npas1).